The chain runs to 210 residues: Probable GTP-binding protein EngB (210 aa).

The EngB-type G domain occupies 25–199 (TGIEVAFAGR…RQKLDTWFSE (175 aa)). GTP contacts are provided by residues 33-40 (GRSNAGKS), 60-64 (GRTQL), 78-81 (DLPG), 145-148 (TKAD), and 178-180 (FSS). The Mg(2+) site is built by Ser40 and Thr62.

It belongs to the TRAFAC class TrmE-Era-EngA-EngB-Septin-like GTPase superfamily. EngB GTPase family. The cofactor is Mg(2+).

Its function is as follows. Necessary for normal cell division and for the maintenance of normal septation. The protein is Probable GTP-binding protein EngB of Shigella flexneri.